A 240-amino-acid chain; its full sequence is Chromatin structure-remodeling complex protein BSH (240 aa).

This sequence belongs to the SNF5 family. In terms of assembly, interacts with SWI3A and SWI3B, but not with BRM. In terms of tissue distribution, expressed in roots, stems, leaves, flowers and siliques.

The protein localises to the nucleus. Functionally, component of a multiprotein complex equivalent of the yeast SWI/SNF complex, an ATP-dependent chromatin-remodeling complex, which is required for the positive and negative regulation of gene expression of a large number of genes. It changes chromatin structure by altering DNA-histone contacts within a nucleosome, leading eventually to a change in nucleosome position, thus facilitating or repressing binding of gene-specific transcription factors. The protein is Chromatin structure-remodeling complex protein BSH (BSH) of Arabidopsis thaliana (Mouse-ear cress).